Reading from the N-terminus, the 39-residue chain is Photosystem II reaction center protein X (39 aa).

The chain crosses the membrane as a helical span at residues W10 to I30.

This sequence belongs to the PsbX family. Type 1 subfamily. PSII is composed of 1 copy each of membrane proteins PsbA, PsbB, PsbC, PsbD, PsbE, PsbF, PsbH, PsbI, PsbJ, PsbK, PsbL, PsbM, PsbT, PsbX, PsbY, PsbZ, Psb30/Ycf12, peripheral proteins PsbO, CyanoQ (PsbQ), PsbU, PsbV and a large number of cofactors. It forms dimeric complexes.

It is found in the cellular thylakoid membrane. Involved in the binding and/or turnover of quinones at the Q(B) site of photosystem II (PSII). PSII is a light-driven water plastoquinone oxidoreductase, using light energy to abstract electrons from H(2)O, generating a proton gradient subsequently used for ATP formation. This chain is Photosystem II reaction center protein X, found in Nostoc punctiforme (strain ATCC 29133 / PCC 73102).